A 256-amino-acid chain; its full sequence is Nuclear shuttle protein (256 aa).

The Bipartite nuclear localization signal signature appears at 18–39 (NITNRYPIKRKYVAGHTRPCVR). The Nuclear localization signal signature appears at 81–96 (SRGPSGDGRSRDYIKL). The interval 150-187 (ELFGPYSACYVNLRLLNNQQHRYRVLHSVKRFVSSSGD) is interaction with Arabidopsis thaliana NSI protein.

This sequence belongs to the begomovirus nuclear shuttle protein family. In terms of assembly, binds to single-stranded and double-stranded viral DNA. Interacts with the host nuclear shuttle interacting (NSI) protein. This interaction may allow NSP to recruit NSI monomers to the viral genome and thus regulate nuclear export of viral genome by NSP.

Its subcellular location is the host nucleus. It localises to the host cytoplasm. It is found in the host cell membrane. Functionally, binds to the genomic viral ssDNA, shuttles it into and out of the cell nucleus. Begomoviruses use 2 proteins to transport their DNA from cell to cell. The nuclear shuttle protein (NSP) shuttles it between nucleus and cytoplasm and the movement protein (MP) probably transports the DNA-NSP complex to the cell periphery and facilitates movement across the cell wall. The protein is Nuclear shuttle protein of Hewittia sublobata (Coralbush).